An 843-amino-acid chain; its full sequence is Lon protease (843 aa).

Basic and acidic residues predominate over residues 1–16 (MRERKETAMSDKEKKG). The segment at 1-22 (MRERKETAMSDKEKKGAGAGAQ) is disordered. A Lon N-terminal domain is found at 42–236 (LPILPLRNSV…LVLELLNRKR (195 aa)). 388-395 (GPPGVGKT) serves as a coordination point for ATP. The Lon proteolytic domain occupies 627 to 808 (TEIAGVATGL…DEVLQAALEE (182 aa)). Residues S714 and K757 contribute to the active site. The segment at 805-843 (ALEENPVGRKPPAAPEPEGEKKPGATPTPPAKKPDEIRV) is disordered.

Belongs to the peptidase S16 family. In terms of assembly, homohexamer. Organized in a ring with a central cavity.

The protein resides in the cytoplasm. The catalysed reaction is Hydrolysis of proteins in presence of ATP.. Functionally, ATP-dependent serine protease that mediates the selective degradation of mutant and abnormal proteins as well as certain short-lived regulatory proteins. Required for cellular homeostasis and for survival from DNA damage and developmental changes induced by stress. Degrades polypeptides processively to yield small peptide fragments that are 5 to 10 amino acids long. Binds to DNA in a double-stranded, site-specific manner. In Anaeromyxobacter dehalogenans (strain 2CP-C), this protein is Lon protease.